We begin with the raw amino-acid sequence, 164 residues long: CDP-archaeol synthase (164 aa).

The next 4 membrane-spanning stretches (helical) occupy residues 3 to 23 (LLYFFLLIWPPYVANGSAVLA), 51 to 71 (YEGFLIGLSTGTFIGYAPNLL), 77 to 97 (LLDAFVLSIAALLGDLFGAFI), and 122 to 142 (LAVYTLYKDISVEYIIAAVII).

The protein belongs to the CDP-archaeol synthase family. Requires Mg(2+) as cofactor.

Its subcellular location is the cell membrane. It catalyses the reaction 2,3-bis-O-(geranylgeranyl)-sn-glycerol 1-phosphate + CTP + H(+) = CDP-2,3-bis-O-(geranylgeranyl)-sn-glycerol + diphosphate. Its pathway is membrane lipid metabolism; glycerophospholipid metabolism. In terms of biological role, catalyzes the formation of CDP-2,3-bis-(O-geranylgeranyl)-sn-glycerol (CDP-archaeol) from 2,3-bis-(O-geranylgeranyl)-sn-glycerol 1-phosphate (DGGGP) and CTP. This reaction is the third ether-bond-formation step in the biosynthesis of archaeal membrane lipids. This Pyrobaculum islandicum (strain DSM 4184 / JCM 9189 / GEO3) protein is CDP-archaeol synthase.